A 284-amino-acid chain; its full sequence is Tropomyosin Tod p 1.0102 (284 aa).

A coiled-coil region spans residues lysine 15 to glutamate 273. Residues glutamate 103–glycine 136 are disordered.

This sequence belongs to the tropomyosin family. Homodimer. Post-translationally, the N-terminus is blocked. Expressed in mantle muscle (at protein level).

In terms of biological role, tropomyosin, in association with the troponin complex, plays a central role in the calcium dependent regulation of muscle contraction. The sequence is that of Tropomyosin Tod p 1.0102 from Todarodes pacificus (Japanese flying squid).